Reading from the N-terminus, the 477-residue chain is Fibrinogen beta chain (477 aa).

A disordered region spans residues 1–76; the sequence is EDLSLVGQPE…ASPRPQEAQK (76 aa). Tyr13 carries the sulfotyrosine modification. Asn27 is a glycosylation site (N-linked (GlcNAc...) asparagine). A compositionally biased stretch (basic residues) spans 44–55; the sequence is RVRRPPLRHRRL. Intrachain disulfides connect Cys220–Cys304, Cys230–Cys259, and Cys412–Cys425. The region spanning 221–476 is the Fibrinogen C-terminal domain; that stretch reads RVPVVSGMHC…QMAMKLRPKW (256 aa).

Heterohexamer; disulfide linked. Contains 2 sets of 3 non-identical chains (alpha, beta and gamma). The 2 heterotrimers are in head to head conformation with the N-termini in a small central domain. Conversion of fibrinogen to fibrin is triggered by thrombin, which cleaves fibrinopeptides A and B from alpha and beta chains, and thus exposes the N-terminal polymerization sites responsible for the formation of the soft clot. The soft clot is converted into the hard clot by factor XIIIA which catalyzes the epsilon-(gamma-glutamyl)lysine cross-linking between gamma chains (stronger) and between alpha chains (weaker) of different monomers.

The protein resides in the secreted. Its function is as follows. Fibrinogen has a double function: yielding monomers that polymerize into fibrin and acting as a cofactor in platelet aggregation. The protein is Fibrinogen beta chain of Petromyzon marinus (Sea lamprey).